A 277-amino-acid polypeptide reads, in one-letter code: Phosphatidylglycerol--prolipoprotein diacylglyceryl transferase (277 aa).

The next 3 helical transmembrane spans lie at 17-37, 63-83, and 101-121; these read LAIHWYGLSYLAAFGLFMLLG, ILFLGVAGVVLGGRLGYCLFY, and GGMAFHGGLLGVIVAMLWFAH. A 1,2-diacyl-sn-glycero-3-phospho-(1'-sn-glycerol) is bound at residue Arg146. Helical transmembrane passes span 182 to 202, 209 to 229, and 234 to 254; these read SQVYQFLLEGLLLFVLLWLYA, GQVAAAFLVGYGVLRFIAEQF, and AFLGILALGMSMGQWLCLPMI.

This sequence belongs to the Lgt family.

It is found in the cell inner membrane. It catalyses the reaction L-cysteinyl-[prolipoprotein] + a 1,2-diacyl-sn-glycero-3-phospho-(1'-sn-glycerol) = an S-1,2-diacyl-sn-glyceryl-L-cysteinyl-[prolipoprotein] + sn-glycerol 1-phosphate + H(+). It functions in the pathway protein modification; lipoprotein biosynthesis (diacylglyceryl transfer). Its function is as follows. Catalyzes the transfer of the diacylglyceryl group from phosphatidylglycerol to the sulfhydryl group of the N-terminal cysteine of a prolipoprotein, the first step in the formation of mature lipoproteins. The chain is Phosphatidylglycerol--prolipoprotein diacylglyceryl transferase from Verminephrobacter eiseniae (strain EF01-2).